A 539-amino-acid polypeptide reads, in one-letter code: Heparanase-like protein 2 (539 aa).

The N-terminal stretch at 1–21 (MGFNVVVFLSCLLLLPPVTFG) is a signal peptide. N-linked (GlcNAc...) asparagine glycans are attached at residues asparagine 143, asparagine 163, and asparagine 181. Residue glutamate 198 is the Proton donor of the active site. An N-linked (GlcNAc...) asparagine glycan is attached at asparagine 300. The active-site Nucleophile is the glutamate 316. Asparagine 421 is a glycosylation site (N-linked (GlcNAc...) asparagine).

It belongs to the glycosyl hydrolase 79 family.

It localises to the lysosome membrane. The protein resides in the secreted. Endoglycosidase which is a cell surface and extracellular matrix-degrading enzyme. Cleaves heparan sulfate proteoglycans (HSPGs) into heparan sulfate side chains and core proteoglycans. In Arabidopsis thaliana (Mouse-ear cress), this protein is Heparanase-like protein 2.